A 469-amino-acid polypeptide reads, in one-letter code: Autophagy-related protein 18 (469 aa).

WD repeat units follow at residues 188–228 (AHRS…KLYQ) and 233–272 (TYPS…NGAS). The short motif at 229-233 (FRRGT) is the L/FRRG motif element. The disordered stretch occupies residues 285-348 (AASPGQDITG…RQSGSFSNIL (64 aa)). Over residues 297-306 (RADRWSRSRS) the composition is skewed to basic and acidic residues. Polar residues-rich tracts occupy residues 307-319 (YDSG…SGSE) and 337-348 (NRRQSGSFSNIL).

The protein belongs to the WD repeat PROPPIN family. In terms of assembly, component of the PI(3,5)P2 regulatory complex.

It localises to the preautophagosomal structure membrane. Its subcellular location is the vacuole membrane. The protein resides in the endosome membrane. The PI(3,5)P2 regulatory complex regulates both the synthesis and turnover of phosphatidylinositol 3,5-bisphosphate (PtdIns(3,5)P2). Necessary for proper vacuole morphology. Plays an important role in osmotically-induced vacuole fragmentation. Required for cytoplasm to vacuole transport (Cvt) vesicle formation, pexophagy and starvation-induced autophagy. Involved in correct ATG9 trafficking to the pre-autophagosomal structure. Might also be involved in premeiotic DNA replication. The chain is Autophagy-related protein 18 (ATG18) from Pyricularia oryzae (strain 70-15 / ATCC MYA-4617 / FGSC 8958) (Rice blast fungus).